A 124-amino-acid polypeptide reads, in one-letter code: Large ribosomal subunit protein bL12 (124 aa).

Belongs to the bacterial ribosomal protein bL12 family. In terms of assembly, homodimer. Part of the ribosomal stalk of the 50S ribosomal subunit. Forms a multimeric L10(L12)X complex, where L10 forms an elongated spine to which 2 to 4 L12 dimers bind in a sequential fashion. Binds GTP-bound translation factors.

In terms of biological role, forms part of the ribosomal stalk which helps the ribosome interact with GTP-bound translation factors. Is thus essential for accurate translation. This chain is Large ribosomal subunit protein bL12, found in Idiomarina loihiensis (strain ATCC BAA-735 / DSM 15497 / L2-TR).